Here is a 157-residue protein sequence, read N- to C-terminus: Ribonuclease H (157 aa).

The region spanning 2 to 145 (NAEISKIYTD…CDAIARAFAA (144 aa)) is the RNase H type-1 domain. Positions 11, 50, 74, and 137 each coordinate Mg(2+).

It belongs to the RNase H family. Monomer. It depends on Mg(2+) as a cofactor.

Its subcellular location is the cytoplasm. The enzyme catalyses Endonucleolytic cleavage to 5'-phosphomonoester.. In terms of biological role, endonuclease that specifically degrades the RNA of RNA-DNA hybrids. This chain is Ribonuclease H, found in Cyanothece sp. (strain PCC 7425 / ATCC 29141).